The sequence spans 294 residues: Arsenical-resistance protein ARR1 (294 aa).

Basic residues predominate over residues 1–11; it reads MAKPRGRKGGR. The segment at 1 to 29 is disordered; sequence MAKPRGRKGGRKPSLTPPKNKRAAQLRAS. The segment at 22 to 45 is basic motif; sequence RAAQLRASQNAFRKRKLERLEELE. One can recognise a bZIP domain in the interval 22 to 72; it reads RAAQLRASQNAFRKRKLERLEELEKKEAQLTVTNDQIHILKKENELLHFML. Residues 44–72 form a leucine-zipper region; it reads LEKKEAQLTVTNDQIHILKKENELLHFML. Residues Cys132, Cys137, and Cys274 each contribute to the arsenite site.

The protein belongs to the bZIP family. YAP subfamily. Homodimer. Phosphorylation by HOG1 promotes nuclear localization in the presence of arsenic.

It is found in the cytoplasm. The protein localises to the nucleus. Transcriptional activity is controlled by regulated degradation by the ubiquitin-proteasome pathway in absence of arsenic. Arsenic-exposure results in stabilization and increased transcriptional activity. Its function is as follows. Transcription activator required for resistance to arsenic compounds and for a regulated expression of ACR2, ACR3 and YCF1. This chain is Arsenical-resistance protein ARR1, found in Saccharomyces cerevisiae (strain ATCC 204508 / S288c) (Baker's yeast).